A 361-amino-acid chain; its full sequence is DNA replication and repair protein RecF (361 aa).

30–37 (GDNAQGKT) provides a ligand contact to ATP.

Belongs to the RecF family.

The protein localises to the cytoplasm. In terms of biological role, the RecF protein is involved in DNA metabolism; it is required for DNA replication and normal SOS inducibility. RecF binds preferentially to single-stranded, linear DNA. It also seems to bind ATP. This Clostridium perfringens (strain ATCC 13124 / DSM 756 / JCM 1290 / NCIMB 6125 / NCTC 8237 / Type A) protein is DNA replication and repair protein RecF.